Consider the following 429-residue polypeptide: MDRIHITGGTPLNGTIPISGAKNAALPLMIASLLTGETLELINVPRLADIAALTRILGNHGVDHMVVGKRPGQTAETGQTVRLTASNVIDTTAPYELVSTMRASFWVIAPLLARFGEAKVSLPGGCAIGTRPVDLLIMALEKLGAEIEIDGGYVVAKTKNGLRGAEITFPTVTVGGTHVALMAAALAYGTTVIDNAAREPEVVDLAECLSKMGARIEGAGTSRIVVEGVARLGGARHEVLPDRIETGTYAMAVAMTGGDVSLVNTRTELLASALDVLASTGTEITALPDGIRVRRNGGGISPADVTTDPFPGFPTDLQAQFMALMTLAKGQSRIRETIFENRFMHVQELARLGARIRLDGDLAVVEGVERLKGAPVMATDLRASVSLVIGALAAEGETQINRVYHLDRGFEALEAKLGRCGARIERVRA.

Residue 22–23 (KN) participates in phosphoenolpyruvate binding. Arg-102 provides a ligand contact to UDP-N-acetyl-alpha-D-glucosamine. The Proton donor role is filled by Cys-126. At Cys-126 the chain carries 2-(S-cysteinyl)pyruvic acid O-phosphothioketal. UDP-N-acetyl-alpha-D-glucosamine contacts are provided by residues 131–135 (RPVDL), Asp-316, and Ile-338.

It belongs to the EPSP synthase family. MurA subfamily.

The protein resides in the cytoplasm. The enzyme catalyses phosphoenolpyruvate + UDP-N-acetyl-alpha-D-glucosamine = UDP-N-acetyl-3-O-(1-carboxyvinyl)-alpha-D-glucosamine + phosphate. Its pathway is cell wall biogenesis; peptidoglycan biosynthesis. Its function is as follows. Cell wall formation. Adds enolpyruvyl to UDP-N-acetylglucosamine. The polypeptide is UDP-N-acetylglucosamine 1-carboxyvinyltransferase (Methylorubrum populi (strain ATCC BAA-705 / NCIMB 13946 / BJ001) (Methylobacterium populi)).